Here is a 284-residue protein sequence, read N- to C-terminus: Deoxyribonuclease-1 (284 aa).

Positions 1 to 22 are cleaved as a signal peptide; it reads MRYTGLMGTLLTLVNLLQLAGT. Residue N40 is glycosylated (N-linked (GlcNAc...) asparagine). The active site involves E100. Residues C123 and C126 are joined by a disulfide bond. The N-linked (GlcNAc...) asparagine glycan is linked to N128. H156 is an active-site residue. A disulfide bond links C195 and C231.

Belongs to the DNase I family. Requires Ca(2+) as cofactor. Mg(2+) serves as cofactor. In terms of processing, N-glycosylated. Highly expressed in the parotid and submandibular gland as well as in the kidney and duodenum (at protein level). Expressed at intermediate level in the ileum, mesenterial lymph nodes, liver, ventral prostate, epididymis, ovary and stomach (at protein level). Expressed at low level in the sublingual, preputial, coagulation and pituitary gland (at protein level). Also present in the lachrymal and thyroid glands, striated muscle, intestine, the urinary bladder and the eye.

The protein localises to the secreted. It is found in the zymogen granule. It localises to the nucleus envelope. The catalysed reaction is Endonucleolytic cleavage to 5'-phosphodinucleotide and 5'-phosphooligonucleotide end-products.. In terms of biological role, serum endocuclease secreted into body fluids by a wide variety of exocrine and endocrine organs. Expressed by non-hematopoietic tissues and preferentially cleaves protein-free DNA. Among other functions, seems to be involved in cell death by apoptosis. Binds specifically to G-actin and blocks actin polymerization. Together with DNASE1L3, plays a key role in degrading neutrophil extracellular traps (NETs). NETs are mainly composed of DNA fibers and are released by neutrophils to bind pathogens during inflammation. Degradation of intravascular NETs by DNASE1 and DNASE1L3 is required to prevent formation of clots that obstruct blood vessels and cause organ damage following inflammation. This is Deoxyribonuclease-1 from Mus musculus (Mouse).